The following is a 289-amino-acid chain: Acetyl-coenzyme A carboxylase carboxyl transferase subunit beta (289 aa).

The region spanning 28-289 (VMTKCPKCKK…QGGEMAVWQS (262 aa)) is the CoA carboxyltransferase N-terminal domain. Zn(2+)-binding residues include Cys-32, Cys-35, Cys-51, and Cys-54. Residues 32-54 (CPKCKKIMYTKEVLKNLKVCVNC) form a C4-type zinc finger.

It belongs to the AccD/PCCB family. In terms of assembly, acetyl-CoA carboxylase is a heterohexamer composed of biotin carboxyl carrier protein (AccB), biotin carboxylase (AccC) and two subunits each of ACCase subunit alpha (AccA) and ACCase subunit beta (AccD). Requires Zn(2+) as cofactor.

The protein localises to the cytoplasm. The enzyme catalyses N(6)-carboxybiotinyl-L-lysyl-[protein] + acetyl-CoA = N(6)-biotinyl-L-lysyl-[protein] + malonyl-CoA. It participates in lipid metabolism; malonyl-CoA biosynthesis; malonyl-CoA from acetyl-CoA: step 1/1. In terms of biological role, component of the acetyl coenzyme A carboxylase (ACC) complex. Biotin carboxylase (BC) catalyzes the carboxylation of biotin on its carrier protein (BCCP) and then the CO(2) group is transferred by the transcarboxylase to acetyl-CoA to form malonyl-CoA. The chain is Acetyl-coenzyme A carboxylase carboxyl transferase subunit beta from Bacillus anthracis (strain A0248).